A 168-amino-acid polypeptide reads, in one-letter code: Large ribosomal subunit protein uL24 (168 aa).

The disordered stretch occupies residues 112-168; it reads LEGKDPRKQPKEAPKAAEKPAKEEPKKETPKAEEKPAKEEPKETKVEKKSEEKEDEN.

This sequence belongs to the universal ribosomal protein uL24 family. Part of the 50S ribosomal subunit.

Functionally, one of two assembly initiator proteins, it binds directly to the 5'-end of the 23S rRNA, where it nucleates assembly of the 50S subunit. Located at the polypeptide exit tunnel on the outside of the subunit. The polypeptide is Large ribosomal subunit protein uL24 (Nitrosopumilus maritimus (strain SCM1)).